Consider the following 505-residue polypeptide: Flagellin (505 aa).

It belongs to the bacterial flagellin family.

It is found in the secreted. The protein localises to the bacterial flagellum. Flagellin is the subunit protein which polymerizes to form the filaments of bacterial flagella. The chain is Flagellin (fliC) from Salmonella derby.